Reading from the N-terminus, the 389-residue chain is Probable acyl-CoA dehydrogenase fadE25 (389 aa).

It belongs to the acyl-CoA dehydrogenase family. Requires FAD as cofactor.

It catalyses the reaction a 2,3-saturated acyl-CoA + A = a 2,3-dehydroacyl-CoA + AH2. The chain is Probable acyl-CoA dehydrogenase fadE25 (fadE25) from Mycobacterium leprae (strain TN).